The chain runs to 186 residues: Zein-alpha PZ19.1 (186 aa).

The signal sequence occupies residues 1–21; the sequence is MAAKIFCLIMLLGLSASAATA.

This sequence belongs to the zein family.

In terms of biological role, zeins are major seed storage proteins. The polypeptide is Zein-alpha PZ19.1 (Zea mays (Maize)).